The chain runs to 621 residues: MALLQISEPGKSLAPHQRRIAVGIDLGTTNSLVAIVRDALPKVLPDAQGRELLPSVIRYLPNGRTQAGFEALESVVIDPKNTIVSVKRFMGRGLLDVEHIESAPYDFVDQPGMLKLRTVAGDKSPIEVSAEILARLRQLAEDSVSDEIVGAVITVPAYFDDAQRQATKDAAKLAGIEVLRLLNEPTAAAITYGLDNASEGVYAVYDLGGGTFDISILRMSRGVFEVLATGGDSALGGDDFDHRLYCWVIEQAKLPPLSIHDHRTLLQACKHAKEQLSHNPLARVHETLADGTVVNVGISQAQFFEITQNLVTKTLMTCKKALRDAGLKAEDVKGVVMVGGSTRMPNVQRAVAELFGTQPLNNLNPDQVVALGAAMQADLLAGNQSKDDEWLLLDVIPLSLGIETMGGLVEKSIPRNTPIPVARAQDFTTFKDGQTALAIQVVQGERELAQDCRSLGRFELRGIPAMAAGAARIRVTFQVDADGFLSVSATEQGSGVKASIDIKPSYGLTDAEITRMLQDGFASAKEDLLSRSLREEQVNAQRLLDAVQTALDSDRSLLNAEEQAAIDREMTTLQKILNEETNSAVVRKAVDQAVKATDDFAQKRMNASIQKALSGKNVTEI.

It belongs to the heat shock protein 70 family.

Chaperone involved in the maturation of iron-sulfur cluster-containing proteins. Has a low intrinsic ATPase activity which is markedly stimulated by HscB. The polypeptide is Chaperone protein HscA homolog (Polynucleobacter necessarius subsp. necessarius (strain STIR1)).